We begin with the raw amino-acid sequence, 141 residues long: Large ribosomal subunit protein uL11 (141 aa).

The protein belongs to the universal ribosomal protein uL11 family. Part of the ribosomal stalk of the 50S ribosomal subunit. Interacts with L10 and the large rRNA to form the base of the stalk. L10 forms an elongated spine to which L12 dimers bind in a sequential fashion forming a multimeric L10(L12)X complex. Post-translationally, one or more lysine residues are methylated.

Functionally, forms part of the ribosomal stalk which helps the ribosome interact with GTP-bound translation factors. The polypeptide is Large ribosomal subunit protein uL11 (Synechococcus sp. (strain WH7803)).